A 113-amino-acid polypeptide reads, in one-letter code: Large ribosomal subunit protein bL19 (113 aa).

It belongs to the bacterial ribosomal protein bL19 family.

This protein is located at the 30S-50S ribosomal subunit interface and may play a role in the structure and function of the aminoacyl-tRNA binding site. The protein is Large ribosomal subunit protein bL19 of Natranaerobius thermophilus (strain ATCC BAA-1301 / DSM 18059 / JW/NM-WN-LF).